Consider the following 179-residue polypeptide: Repressor of phase 1 flagellin gene (179 aa).

In terms of biological role, transcriptional repressor of the FliC phase-1 flagellin. This Salmonella typhimurium (strain LT2 / SGSC1412 / ATCC 700720) protein is Repressor of phase 1 flagellin gene (fljA).